The primary structure comprises 752 residues: MAISSTERRAKNVQIFVEKDAVETSFAKWAQPGHFSRTLAKGPKTTTWIWNLHADAHDFDSQTSSLEEVSRKIFSAHFGQLAVIFLWISGMHFHGAYFSNYSAWLSDPISIKQSSQVVWPIVGQEILNADVGGNFQGVQTTSGWFQMWRAEGITSEVELYWIAIGGLIMSALMLFAGWFHYHKAAPKLEWFQNAESMMNHHLAGLLGLGCLSWSGHQIHIALPINKLLDAGVAPQEIPLPHEFLINRELMAQLYPSFNKGLAPFFSGQWGEYSDFLTFKGGLNPVTGGLWLSDIAHHHLALSVLFIFAGHMYRTNWGIGHSMKEILEAHKGPFTGEGHKGLYEILTTSWHAQLAINLAMMGSLSIIVAHHMYAMPPYPYIATDYATQLSLFTHHMWIGGFCVVGGAAHGAIFMVRDYTPANNYNNLLDRVLRHRDAIISHLNWVCIFLGCHSFGLYIHNDTMRALGRPQDMFSDKAIQLQPIFAQWVQNIHLLAPGTTAPNALATTSYAFGGDVVEVGGKIAMMPIKLGTADFMVHHIHAFTIHVTVLILLKGVLYARSSKLIPDKANLGFRFPCDGPGRGGTCQSSSWDHVFLGLFWMYNSISVVIFHFSWKMQSDVWGTITPDGNISHITGGNFAQSSITINGWLRDFLWSQASQVIQSYGSASSAYGLIFLGAHFIWAFSLMFLFSGRGYWQELIESIVWAHNKLNFAPAIQPRALSITQGRAVGLAHYLLGGIGTTWSFFLARAISIT.

The next 8 helical transmembrane spans lie at 73–96 (IFSA…FHGA), 159–182 (LYWI…FHYH), 198–222 (MNHH…HIAL), 294–312 (IAHH…GHMY), 349–372 (WHAQ…HHMY), 388–414 (LSLF…IFMV), 436–458 (AIIS…LYIH), and 533–551 (FMVH…LILL). 2 residues coordinate [4Fe-4S] cluster: C575 and C584. Transmembrane regions (helical) follow at residues 591 to 612 (HVFL…HFSW) and 666 to 688 (SSAY…MFLF). H677 provides a ligand contact to chlorophyll a'. The chlorophyll a site is built by M685 and Y693. W694 lines the phylloquinone pocket. The helical transmembrane segment at 726–746 (AVGLAHYLLGGIGTTWSFFLA) threads the bilayer.

It belongs to the PsaA/PsaB family. The PsaA/B heterodimer binds the P700 chlorophyll special pair and subsequent electron acceptors. PSI consists of a core antenna complex that captures photons, and an electron transfer chain that converts photonic excitation into a charge separation. The eukaryotic PSI reaction center is composed of at least 11 subunits. It depends on P700 is a chlorophyll a/chlorophyll a' dimer, A0 is one or more chlorophyll a, A1 is one or both phylloquinones and FX is a shared 4Fe-4S iron-sulfur center. as a cofactor.

Its subcellular location is the plastid. The protein localises to the chloroplast thylakoid membrane. The enzyme catalyses reduced [plastocyanin] + hnu + oxidized [2Fe-2S]-[ferredoxin] = oxidized [plastocyanin] + reduced [2Fe-2S]-[ferredoxin]. In terms of biological role, psaA and PsaB bind P700, the primary electron donor of photosystem I (PSI), as well as the electron acceptors A0, A1 and FX. PSI is a plastocyanin/cytochrome c6-ferredoxin oxidoreductase, converting photonic excitation into a charge separation, which transfers an electron from the donor P700 chlorophyll pair to the spectroscopically characterized acceptors A0, A1, FX, FA and FB in turn. Oxidized P700 is reduced on the lumenal side of the thylakoid membrane by plastocyanin or cytochrome c6. The sequence is that of Photosystem I P700 chlorophyll a apoprotein A1 from Trieres chinensis (Marine centric diatom).